Here is a 384-residue protein sequence, read N- to C-terminus: S-adenosylmethionine synthase (384 aa).

Position 16 (histidine 16) interacts with ATP. Aspartate 18 contributes to the Mg(2+) binding site. Glutamate 44 serves as a coordination point for K(+). 2 residues coordinate L-methionine: glutamate 57 and glutamine 100. Residues 100-110 (QSADIAMGVDE) form a flexible loop region. ATP-binding positions include 165-167 (DAK), aspartate 240, 246-247 (RK), alanine 263, and lysine 267. Aspartate 240 contributes to the L-methionine binding site. Position 271 (lysine 271) interacts with L-methionine.

It belongs to the AdoMet synthase family. In terms of assembly, homotetramer; dimer of dimers. It depends on Mg(2+) as a cofactor. Requires K(+) as cofactor.

It is found in the cytoplasm. The catalysed reaction is L-methionine + ATP + H2O = S-adenosyl-L-methionine + phosphate + diphosphate. The protein operates within amino-acid biosynthesis; S-adenosyl-L-methionine biosynthesis; S-adenosyl-L-methionine from L-methionine: step 1/1. Functionally, catalyzes the formation of S-adenosylmethionine (AdoMet) from methionine and ATP. The overall synthetic reaction is composed of two sequential steps, AdoMet formation and the subsequent tripolyphosphate hydrolysis which occurs prior to release of AdoMet from the enzyme. The polypeptide is S-adenosylmethionine synthase (Cellvibrio japonicus (strain Ueda107) (Pseudomonas fluorescens subsp. cellulosa)).